The chain runs to 311 residues: Mediator of RNA polymerase II transcription subunit 27 (311 aa).

The protein belongs to the Mediator complex subunit 27 family. As to quaternary structure, component of the Mediator complex.

The protein localises to the nucleus. In terms of biological role, component of the Mediator complex, a coactivator involved in the regulated transcription of nearly all RNA polymerase II-dependent genes. Mediator functions as a bridge to convey information from gene-specific regulatory proteins to the basal RNA polymerase II transcription machinery. Mediator is recruited to promoters by direct interactions with regulatory proteins and serves as a scaffold for the assembly of a functional preinitiation complex with RNA polymerase II and the general transcription factors. Required for the development of dopaminergic amacrine cells in the retina. May also negatively regulate the development of rod photoreceptor cells. The protein is Mediator of RNA polymerase II transcription subunit 27 (med27) of Danio rerio (Zebrafish).